Here is a 754-residue protein sequence, read N- to C-terminus: Elongation factor G-2, mitochondrial (754 aa).

Residues 63 to 340 (DKLRNIGISA…GVVSFLPSPN (278 aa)) enclose the tr-type G domain. GTP-binding positions include 72–79 (AHIDSGKT), 139–143 (DTPGH), and 193–196 (NKLD).

Belongs to the TRAFAC class translation factor GTPase superfamily. Classic translation factor GTPase family. EF-G/EF-2 subfamily. Expressed in cotyledons and adult leaves at the same levels.

The protein resides in the mitochondrion. It functions in the pathway protein biosynthesis; polypeptide chain elongation. In terms of biological role, mitochondrial GTPase that catalyzes the GTP-dependent ribosomal translocation step during translation elongation. During this step, the ribosome changes from the pre-translocational (PRE) to the post-translocational (POST) state as the newly formed A-site-bound peptidyl-tRNA and P-site-bound deacylated tRNA move to the P and E sites, respectively. Catalyzes the coordinated movement of the two tRNA molecules, the mRNA and conformational changes in the ribosome. The polypeptide is Elongation factor G-2, mitochondrial (MEFG2) (Arabidopsis thaliana (Mouse-ear cress)).